Here is a 142-residue protein sequence, read N- to C-terminus: Small ribosomal subunit protein uS12 (142 aa).

The protein belongs to the universal ribosomal protein uS12 family. Part of the 30S ribosomal subunit.

With S4 and S5 plays an important role in translational accuracy. Located at the interface of the 30S and 50S subunits. This chain is Small ribosomal subunit protein uS12, found in Methanothrix thermoacetophila (strain DSM 6194 / JCM 14653 / NBRC 101360 / PT) (Methanosaeta thermophila).